Reading from the N-terminus, the 58-residue chain is Large ribosomal subunit protein bL32c (58 aa).

2 disordered regions span residues 1-21 and 34-58; these read MAVP…SQWM and LAGR…MQPN. The segment covering 44–58 has biased composition (low complexity); it reads QMQPTQMQPTQMQPN.

Belongs to the bacterial ribosomal protein bL32 family.

It is found in the plastid. The protein localises to the chloroplast. This is Large ribosomal subunit protein bL32c from Cyanidioschyzon merolae (strain NIES-3377 / 10D) (Unicellular red alga).